We begin with the raw amino-acid sequence, 77 residues long: U8-lycotoxin-Ls1p (77 aa).

Residues 1–20 (MKLMIFTGLVLFAIVSLIEA) form the signal peptide. The propeptide occupies 21-26 (QAENEK).

Belongs to the neurotoxin 19 (CSTX) family. 08 (U8-Lctx) subfamily. In terms of processing, contains 4 disulfide bonds. Expressed by the venom gland.

Its subcellular location is the secreted. This chain is U8-lycotoxin-Ls1p, found in Lycosa singoriensis (Wolf spider).